The following is a 559-amino-acid chain: Sporulation protein kinase mde3 (559 aa).

A Protein kinase domain is found at 21–323 (YLVKQKLGDG…TAKYCKEVFF (303 aa)). ATP is bound by residues 27-35 (LGDGSFGTV) and K53. The active-site Proton acceptor is D150.

This sequence belongs to the protein kinase superfamily. Ser/Thr protein kinase family.

The catalysed reaction is L-seryl-[protein] + ATP = O-phospho-L-seryl-[protein] + ADP + H(+). It carries out the reaction L-threonyl-[protein] + ATP = O-phospho-L-threonyl-[protein] + ADP + H(+). Functionally, protein kinase which is essential for spore formation. In Schizosaccharomyces pombe (strain 972 / ATCC 24843) (Fission yeast), this protein is Sporulation protein kinase mde3 (mde3).